We begin with the raw amino-acid sequence, 209 residues long: High mobility group protein B2 (209 aa).

Lys3 carries the N6-acetyllysine modification. The HMG box 1 DNA-binding region spans 9–79 (PRGKMSSYAF…RYDREMKNYV (71 aa)). Cys23 bears the Cysteine sulfonic acid (-SO3H); alternate mark. A disulfide bond links Cys23 and Cys45. Lys30 bears the N6-acetyllysine mark. The residue at position 35 (Ser35) is a Phosphoserine. Lys43 carries the post-translational modification N6-acetyllysine. At Cys45 the chain carries Cysteine sulfonic acid (-SO3H); alternate. Basic and acidic residues predominate over residues 52 to 76 (MSAKEKSKFEDMAKSDKARYDREMK). Disordered regions lie at residues 52–150 (MSAK…KAAK) and 162–209 (YRAK…EDEE). N6-acetyllysine is present on Lys90. A DNA-binding region (HMG box 2) is located at residues 95–163 (PKRPPSAFFL…KYEKDIAAYR (69 aa)). Phosphoserine is present on Ser100. At Cys106 the chain carries Cysteine sulfonic acid (-SO3H). Composition is skewed to basic and acidic residues over residues 107 to 117 (SEHRPKIKSEH), 137 to 150 (SAKDKQPYEQKAAK), and 162 to 172 (YRAKGKSEAGK). 2 positions are modified to N6-acetyllysine: Lys114 and Lys141. Residues 165–180 (KGKSEAGKKGPGRPTG) form a required for chemotactic activity region. Over residues 187 to 209 (PEDEEEEEEEEDEDEEEEDEDEE) the composition is skewed to acidic residues.

This sequence belongs to the HMGB family. Interacts with POU2F2, POU2F1 and POU3F1. Component of the RAG complex composed of core components RAG1 and RAG2, and associated component HMGB1 or HMGB2. Component of the SET complex, composed of at least ANP32A, APEX1, HMGB2, NME1, SET and TREX1. Directly interacts with SET. Interacts with LEF1. In terms of processing, reduction/oxidation of cysteine residues Cys-23, Cys-45 and Cys-106 and a possible intramolecular disulfide bond involving Cys-23 and Cys-45 give rise to different redox forms with specific functional activities in various cellular compartments: 1- fully reduced HMGB2 (HMGB2C23hC45hC106h), 2- disulfide HMGB2 (HMGB2C23-C45C106h) and 3- sulfonyl HMGB2 (HMGB2C23soC45soC106so).

It localises to the nucleus. It is found in the chromosome. The protein localises to the cytoplasm. Its subcellular location is the secreted. Its function is as follows. Multifunctional protein with various roles in different cellular compartments. May act in a redox sensitive manner. In the nucleus is an abundant chromatin-associated non-histone protein involved in transcription, chromatin remodeling and V(D)J recombination and probably other processes. Binds DNA with a preference to non-canonical DNA structures such as single-stranded DNA. Can bent DNA and enhance DNA flexibility by looping thus providing a mechanism to promote activities on various gene promoters by enhancing transcription factor binding and/or bringing distant regulatory sequences into close proximity. Involved in V(D)J recombination by acting as a cofactor of the RAG complex: acts by stimulating cleavage and RAG protein binding at the 23 bp spacer of conserved recombination signal sequences (RSS). Proposed to be involved in the innate immune response to nucleic acids by acting as a cytoplasmic promiscuous immunogenic DNA/RNA sensor which cooperates with subsequent discriminative sensing by specific pattern recognition receptors. In the extracellular compartment acts as a chemokine. Promotes proliferation and migration of endothelial cells implicating AGER/RAGE. Has antimicrobial activity in gastrointestinal epithelial tissues. Involved in inflammatory response to antigenic stimulus coupled with pro-inflammatory activity. May play a role in germ cell differentiation. Involved in modulation of neurogenesis probably by regulation of neural stem proliferation. Involved in articular cartilage surface maintenance implicating LEF1 and the Wnt/beta-catenin pathway. The protein is High mobility group protein B2 (HMGB2) of Bos taurus (Bovine).